The chain runs to 182 residues: MEKFKEIMDANQMRRALVRISHEILEKNKGVENLCLVGIQRRGVNLAKRIQENIEKIEGVKLPLGILDITFYRDDLSLLSEHPTVNSTRIDFDINNKKIVLVDDVLFTGRTVRAAIEALMDMGRPKMIQLAVLIDRGHRELPIRADYVGKNVPTSRKEIVHVLVDEFDNDNRVIIEQLDREI.

Positions 99-111 (IVLVDDVLFTGRT) match the PRPP-binding motif.

The protein belongs to the purine/pyrimidine phosphoribosyltransferase family. PyrR subfamily. Homodimer and homohexamer; in equilibrium.

It catalyses the reaction UMP + diphosphate = 5-phospho-alpha-D-ribose 1-diphosphate + uracil. Its function is as follows. Regulates transcriptional attenuation of the pyrimidine nucleotide (pyr) operon by binding in a uridine-dependent manner to specific sites on pyr mRNA. This disrupts an antiterminator hairpin in the RNA and favors formation of a downstream transcription terminator, leading to a reduced expression of downstream genes. Also displays a weak uracil phosphoribosyltransferase activity which is not physiologically significant. The chain is Bifunctional protein PyrR from Caldicellulosiruptor bescii (strain ATCC BAA-1888 / DSM 6725 / KCTC 15123 / Z-1320) (Anaerocellum thermophilum).